The following is a 200-amino-acid chain: Recombination protein RecR (200 aa).

Residues 57-72 (CSQCRDFTEEDTCNIC) form a C4-type zinc finger. The 96-residue stretch at 81-176 (GLLCVVEMPA…KVSRIAHGIP (96 aa)) folds into the Toprim domain.

It belongs to the RecR family.

Its function is as follows. May play a role in DNA repair. It seems to be involved in an RecBC-independent recombinational process of DNA repair. It may act with RecF and RecO. The sequence is that of Recombination protein RecR from Haemophilus influenzae (strain 86-028NP).